Consider the following 364-residue polypeptide: Chorismate synthase (364 aa).

Residue Arg48 coordinates NADP(+). Residues 126–128, Gly288, 303–307, and Arg329 contribute to the FMN site; these read RSS and KPIAS.

It belongs to the chorismate synthase family. Homotetramer. Requires FMNH2 as cofactor.

It catalyses the reaction 5-O-(1-carboxyvinyl)-3-phosphoshikimate = chorismate + phosphate. It participates in metabolic intermediate biosynthesis; chorismate biosynthesis; chorismate from D-erythrose 4-phosphate and phosphoenolpyruvate: step 7/7. Functionally, catalyzes the anti-1,4-elimination of the C-3 phosphate and the C-6 proR hydrogen from 5-enolpyruvylshikimate-3-phosphate (EPSP) to yield chorismate, which is the branch point compound that serves as the starting substrate for the three terminal pathways of aromatic amino acid biosynthesis. This reaction introduces a second double bond into the aromatic ring system. The protein is Chorismate synthase of Desulfovibrio desulfuricans (strain ATCC 27774 / DSM 6949 / MB).